The chain runs to 68 residues: Sec-independent protein translocase protein TatA (68 aa).

A helical membrane pass occupies residues 1-21 (MGSFSIWHWLIVLVVVLLLFG). The disordered stretch occupies residues 46–68 (EEAASADKTIDGKTVEHKSDEVR). The segment covering 53-68 (KTIDGKTVEHKSDEVR) has biased composition (basic and acidic residues).

This sequence belongs to the TatA/E family. In terms of assembly, the Tat system comprises two distinct complexes: a TatABC complex, containing multiple copies of TatA, TatB and TatC subunits, and a separate TatA complex, containing only TatA subunits. Substrates initially bind to the TatABC complex, which probably triggers association of the separate TatA complex to form the active translocon.

It localises to the cell inner membrane. Its function is as follows. Part of the twin-arginine translocation (Tat) system that transports large folded proteins containing a characteristic twin-arginine motif in their signal peptide across membranes. TatA could form the protein-conducting channel of the Tat system. The polypeptide is Sec-independent protein translocase protein TatA (Sinorhizobium fredii (strain NBRC 101917 / NGR234)).